Consider the following 107-residue polypeptide: EMBRYO SURROUNDING FACTOR 1-like protein 5 (107 aa).

The first 22 residues, 1-22, serve as a signal peptide directing secretion; that stretch reads MSLLRFAILCIIFVSLFGVHEC. Intrachain disulfides connect Cys35–Cys49, Cys40–Cys69, Cys47–Cys65, and Cys50–Cys58. A helical membrane pass occupies residues 87–107; the sequence is GLGPPIYLFFLGQFIYFVLGL.

This sequence belongs to the MEG family. In terms of tissue distribution, expressed in flowers.

It localises to the membrane. This is EMBRYO SURROUNDING FACTOR 1-like protein 5 (ESFL5) from Arabidopsis thaliana (Mouse-ear cress).